The sequence spans 134 residues: Small ribosomal subunit protein uS11 (134 aa).

This sequence belongs to the universal ribosomal protein uS11 family. Part of the 30S ribosomal subunit. Interacts with proteins S7 and S18. Binds to IF-3.

Its function is as follows. Located on the platform of the 30S subunit, it bridges several disparate RNA helices of the 16S rRNA. Forms part of the Shine-Dalgarno cleft in the 70S ribosome. The polypeptide is Small ribosomal subunit protein uS11 (Variovorax paradoxus (strain S110)).